Reading from the N-terminus, the 144-residue chain is Transcription antitermination protein NusB (144 aa).

The protein belongs to the NusB family.

Its function is as follows. Involved in transcription antitermination. Required for transcription of ribosomal RNA (rRNA) genes. Binds specifically to the boxA antiterminator sequence of the ribosomal RNA (rrn) operons. The polypeptide is Transcription antitermination protein NusB (Histophilus somni (strain 129Pt) (Haemophilus somnus)).